A 474-amino-acid polypeptide reads, in one-letter code: Aspartyl/glutamyl-tRNA(Asn/Gln) amidotransferase subunit B (474 aa).

It belongs to the GatB/GatE family. GatB subfamily. Heterotrimer of A, B and C subunits.

It catalyses the reaction L-glutamyl-tRNA(Gln) + L-glutamine + ATP + H2O = L-glutaminyl-tRNA(Gln) + L-glutamate + ADP + phosphate + H(+). It carries out the reaction L-aspartyl-tRNA(Asn) + L-glutamine + ATP + H2O = L-asparaginyl-tRNA(Asn) + L-glutamate + ADP + phosphate + 2 H(+). In terms of biological role, allows the formation of correctly charged Asn-tRNA(Asn) or Gln-tRNA(Gln) through the transamidation of misacylated Asp-tRNA(Asn) or Glu-tRNA(Gln) in organisms which lack either or both of asparaginyl-tRNA or glutaminyl-tRNA synthetases. The reaction takes place in the presence of glutamine and ATP through an activated phospho-Asp-tRNA(Asn) or phospho-Glu-tRNA(Gln). The sequence is that of Aspartyl/glutamyl-tRNA(Asn/Gln) amidotransferase subunit B from Limosilactobacillus reuteri (strain DSM 20016) (Lactobacillus reuteri).